Consider the following 353-residue polypeptide: MDDKKAGAGVSAEKQKALAAALSQIEKQFGKGSIMRLGDGEIEQDIQVVSTGSLGLDIALGVGGLPRGRVVEIYGPESSGKTTLTLQVVAEMQKLGGTCAFIDAEHALDVQYAGKLGVDVGNLLISQPDTGEQALEITDALVRSGSIDLIVIDSVAALVPKAEIEGEMGDSLPGLQARLMSQGLRKLTGTIKRTNCLVIFINQIRMKIGVMFGSPETTTGGNALKFYASVRLDIRRIGSIKKGDEVVGNETKVKVVKNKVSPPFREAFFDILYGQGISRQGEIIDLGVDAKIVEKAGAWYSYNGEKIGQGKDNAREYLRENPDIADEIENKVRLALGVAPLNTVAGAPAEVEG.

An ATP-binding site is contributed by Gly-75–Thr-82.

This sequence belongs to the RecA family.

The protein localises to the cytoplasm. Can catalyze the hydrolysis of ATP in the presence of single-stranded DNA, the ATP-dependent uptake of single-stranded DNA by duplex DNA, and the ATP-dependent hybridization of homologous single-stranded DNAs. It interacts with LexA causing its activation and leading to its autocatalytic cleavage. The sequence is that of Protein RecA from Cupriavidus necator (Alcaligenes eutrophus).